A 147-amino-acid chain; its full sequence is UPF0306 protein YhbP (147 aa).

This sequence belongs to the UPF0306 family.

This chain is UPF0306 protein YhbP, found in Escherichia coli O17:K52:H18 (strain UMN026 / ExPEC).